Here is a 1094-residue protein sequence, read N- to C-terminus: Protein transport protein Sec24C (1094 aa).

Positions 1-338 are disordered; sequence MNVNQSVPPV…PIQVIEDDRN (338 aa). The span at 8–19 shows a compositional bias: pro residues; that stretch reads PPVPPFGQPQPI. Composition is skewed to low complexity over residues 20-29 and 60-77; these read YPGYHQSSYG and SRAP…AQAP. Positions 90 to 101 are enriched in polar residues; that stretch reads DVQNGPSSTVQM. A compositionally biased stretch (pro residues) spans 123–132; that stretch reads VLQPYGPPPT. 4 stretches are compositionally biased toward polar residues: residues 133-144, 165-175, 189-215, and 240-251; these read SAQVATQLSGMQ, SLASASGSFPN, PLSQ…SFTP, and SVSQPNHVSSPP. Threonine 214 is modified (phosphothreonine). A compositionally biased stretch (low complexity) spans 273 to 282; sequence PQQPGYQPQQ. Zn(2+) is bound by residues cysteine 425, cysteine 428, cysteine 447, and cysteine 450. The interval 425–450 is zinc finger-like; sequence CNRCKAYMCPFMQFIEGGRRFQCCFC. One copy of the Gelsolin-like repeat lies at 962 to 1034; sequence TTEPPAVRAS…DNPLSKKVRG (73 aa).

The protein belongs to the SEC23/SEC24 family. SEC24 subfamily. As to quaternary structure, COPII is composed of at least five proteins: the Sec23/24 complex, the Sec13/31 complex and Sar1. Interacts with TMED2 and TMED10. Interacts with GOSR2 (via IxM motif) and STX5 (via IxM motif); recruits GOSR2 and STX5 into COPII-coated vesicles. Interacts with DDHD1. Interacts with STING1; promoting STING1 translocation to the COPII vesicles. Ubiquitous.

The protein localises to the cytoplasmic vesicle. It localises to the COPII-coated vesicle membrane. Its subcellular location is the endoplasmic reticulum membrane. It is found in the cytoplasm. The protein resides in the cytosol. Component of the coat protein complex II (COPII) which promotes the formation of transport vesicles from the endoplasmic reticulum (ER). The coat has two main functions, the physical deformation of the endoplasmic reticulum membrane into vesicles and the selection of cargo molecules for their transport to the Golgi complex. Plays a central role in cargo selection within the COPII complex and together with SEC24D may have a different specificity compared to SEC24A and SEC24B. May more specifically package GPI-anchored proteins through the cargo receptor TMED10. May also be specific for IxM motif-containing cargos like the SNAREs GOSR2 and STX5. In Homo sapiens (Human), this protein is Protein transport protein Sec24C.